A 360-amino-acid polypeptide reads, in one-letter code: Probable dual-specificity RNA methyltransferase RlmN (360 aa).

E91 serves as the catalytic Proton acceptor. A Radical SAM core domain is found at 97 to 335 (QHYGQSVCVT…CVVRQEHGTD (239 aa)). Residues C104 and C340 are joined by a disulfide bond. Residues C111, C115, and C118 each contribute to the [4Fe-4S] cluster site. S-adenosyl-L-methionine contacts are provided by residues 163–164 (GE), S195, 218–220 (SLH), and N296. The active-site S-methylcysteine intermediate is C340.

This sequence belongs to the radical SAM superfamily. RlmN family. Requires [4Fe-4S] cluster as cofactor.

Its subcellular location is the cytoplasm. The enzyme catalyses adenosine(2503) in 23S rRNA + 2 reduced [2Fe-2S]-[ferredoxin] + 2 S-adenosyl-L-methionine = 2-methyladenosine(2503) in 23S rRNA + 5'-deoxyadenosine + L-methionine + 2 oxidized [2Fe-2S]-[ferredoxin] + S-adenosyl-L-homocysteine. It carries out the reaction adenosine(37) in tRNA + 2 reduced [2Fe-2S]-[ferredoxin] + 2 S-adenosyl-L-methionine = 2-methyladenosine(37) in tRNA + 5'-deoxyadenosine + L-methionine + 2 oxidized [2Fe-2S]-[ferredoxin] + S-adenosyl-L-homocysteine. Functionally, specifically methylates position 2 of adenine 2503 in 23S rRNA and position 2 of adenine 37 in tRNAs. This Streptococcus equi subsp. equi (strain 4047) protein is Probable dual-specificity RNA methyltransferase RlmN.